A 350-amino-acid polypeptide reads, in one-letter code: tRNA-splicing endonuclease (350 aa).

Residues Y286, H297, and K328 contribute to the active site.

This sequence belongs to the tRNA-intron endonuclease family. Archaeal long subfamily. As to quaternary structure, homodimer.

It catalyses the reaction pretRNA = a 3'-half-tRNA molecule with a 5'-OH end + a 5'-half-tRNA molecule with a 2',3'-cyclic phosphate end + an intron with a 2',3'-cyclic phosphate and a 5'-hydroxyl terminus.. Its function is as follows. Endonuclease that removes tRNA introns. Cleaves pre-tRNA at the 5'- and 3'-splice sites to release the intron. The products are an intron and two tRNA half-molecules bearing 2',3' cyclic phosphate and 5'-OH termini. Recognizes a pseudosymmetric substrate in which 2 bulged loops of 3 bases are separated by a stem of 4 bp. This is tRNA-splicing endonuclease from Methanosarcina barkeri (strain Fusaro / DSM 804).